The chain runs to 329 residues: Biotin synthase (329 aa).

A Radical SAM core domain is found at 48-278 (FLGTGVDLCS…DRKIAVCGGR (231 aa)). Residues cysteine 66, cysteine 70, and cysteine 73 each contribute to the [4Fe-4S] cluster site. Positions 143 and 203 each coordinate [2Fe-2S] cluster.

This sequence belongs to the radical SAM superfamily. Biotin synthase family. As to quaternary structure, homodimer. The cofactor is [4Fe-4S] cluster. [2Fe-2S] cluster serves as cofactor.

The catalysed reaction is (4R,5S)-dethiobiotin + (sulfur carrier)-SH + 2 reduced [2Fe-2S]-[ferredoxin] + 2 S-adenosyl-L-methionine = (sulfur carrier)-H + biotin + 2 5'-deoxyadenosine + 2 L-methionine + 2 oxidized [2Fe-2S]-[ferredoxin]. The protein operates within cofactor biosynthesis; biotin biosynthesis; biotin from 7,8-diaminononanoate: step 2/2. In terms of biological role, catalyzes the conversion of dethiobiotin (DTB) to biotin by the insertion of a sulfur atom into dethiobiotin via a radical-based mechanism. The polypeptide is Biotin synthase (Geobacter sulfurreducens (strain ATCC 51573 / DSM 12127 / PCA)).